The following is a 267-amino-acid chain: Putative phosphatase bbp_030 (267 aa).

Residue Asp8 is the Nucleophile of the active site. Asp8 is a binding site for Mg(2+). Leu9 contacts phosphate. Asp10 serves as a coordination point for Mg(2+). Phosphate-binding positions include 42–43 (TG) and Lys191. Asp214 provides a ligand contact to Mg(2+). Residue Asn217 coordinates phosphate.

This sequence belongs to the HAD-like hydrolase superfamily. Cof family. Mg(2+) is required as a cofactor.

The chain is Putative phosphatase bbp_030 from Buchnera aphidicola subsp. Baizongia pistaciae (strain Bp).